Here is a 162-residue protein sequence, read N- to C-terminus: MSIDRYHQQFTVSWDQLHRDVRALCHQLVERDFQGIVAITRGGLIPAALIARELNVRLVDTVCIKSYEHQDQGGLQVMKGIDHDGAGWLLVDDLVDTGNTARAVREMLPEAHFVTVYAKPEGRPLVDQYLTEVAQDCWIQFPWDMGVAYVEPLVDQVRSRDS.

5-phospho-alpha-D-ribose 1-diphosphate is bound by residues 41-42 (RG) and 92-100 (DDLVDTGNT). D93 lines the Mg(2+) pocket. Guanine is bound by residues D96 and I139. Residues D96 and I139 each contribute to the xanthine site. GMP-binding positions include 96-100 (DTGNT) and 138-139 (WI).

The protein belongs to the purine/pyrimidine phosphoribosyltransferase family. XGPT subfamily. In terms of assembly, homotetramer. The cofactor is Mg(2+).

It localises to the cell inner membrane. It carries out the reaction GMP + diphosphate = guanine + 5-phospho-alpha-D-ribose 1-diphosphate. It catalyses the reaction XMP + diphosphate = xanthine + 5-phospho-alpha-D-ribose 1-diphosphate. The catalysed reaction is IMP + diphosphate = hypoxanthine + 5-phospho-alpha-D-ribose 1-diphosphate. It participates in purine metabolism; GMP biosynthesis via salvage pathway; GMP from guanine: step 1/1. The protein operates within purine metabolism; XMP biosynthesis via salvage pathway; XMP from xanthine: step 1/1. Purine salvage pathway enzyme that catalyzes the transfer of the ribosyl-5-phosphate group from 5-phospho-alpha-D-ribose 1-diphosphate (PRPP) to the N9 position of the 6-oxopurines guanine and xanthine to form the corresponding ribonucleotides GMP (guanosine 5'-monophosphate) and XMP (xanthosine 5'-monophosphate), with the release of PPi. To a lesser extent, also acts on hypoxanthine. The chain is Xanthine-guanine phosphoribosyltransferase from Chromohalobacter salexigens (strain ATCC BAA-138 / DSM 3043 / CIP 106854 / NCIMB 13768 / 1H11).